We begin with the raw amino-acid sequence, 1258 residues long: Phospholipid-transporting ATPase C887.12 (1258 aa).

Disordered stretches follow at residues 1-41 and 53-83; these read MARD…LGED and YISS…SKAN. At 1-183 the chain is on the cytoplasmic side; that stretch reads MARDVDNKQN…PKFLKEQFSK (183 aa). Polar residues predominate over residues 53 to 64; the sequence is YISSSGQNSTNP. The helical transmembrane segment at 184–204 threads the bilayer; the sequence is YANLFFLFTAVVQQIPGITPV. At 205 to 208 the chain is on the lumenal side; that stretch reads NRYT. A helical transmembrane segment spans residues 209–229; sequence TIGPMLIVLSVSGIKEIMEDI. The Cytoplasmic segment spans residues 230–406; it reads KRKKQDQELN…TSVEKQVNSQ (177 aa). The chain crosses the membrane as a helical span at residues 407-427; it reads ILFLLCIFVFLCFASSLGALI. The Lumenal segment spans residues 428-451; sequence HRSVYGSALSYVKYTSNRAGMFFK. A helical transmembrane segment spans residues 452–472; that stretch reads GLLTFWILYSNLVPISLFVTF. Topologically, residues 473–974 are cytoplasmic; sequence ELVRYIQAQL…KLILYSFYKN (502 aa). Residue D518 is the 4-aspartylphosphate intermediate of the active site. 15 residues coordinate ATP: D518, K519, T520, E613, F654, S656, K659, K677, R710, T711, T790, G791, D792, R883, and K889. Residue D518 coordinates Mg(2+). T520 lines the Mg(2+) pocket. D909 contributes to the Mg(2+) binding site. ATP contacts are provided by N912 and D913. D913 provides a ligand contact to Mg(2+). A helical membrane pass occupies residues 975 to 995; sequence IALYMTQFWYAFCNAFSGQVI. The Lumenal portion of the chain corresponds to 996–998; it reads FES. The helical transmembrane segment at 999–1019 threads the bilayer; the sequence is WSISLYNVLFTVLPPVVIGIF. The Cytoplasmic portion of the chain corresponds to 1020-1051; sequence DQFVSAGQLFQYPQLYQLGQRSEFFNLKRFWS. A helical membrane pass occupies residues 1052–1072; that stretch reads WITNGFYHSLLLFLCSIAVFY. Residues 1073 to 1086 are Lumenal-facing; sequence YDGPNKDGLASGHW. The chain crosses the membrane as a helical span at residues 1087–1107; it reads VWGTTLYAAILATVLGKAALI. K1103 is an a 1,2-diacyl-sn-glycero-3-phospho-(1D-myo-inositol 4-phosphate) binding site. Topologically, residues 1108-1115 are cytoplasmic; the sequence is SNHWTQYT. A helical transmembrane segment spans residues 1116-1136; sequence VIATLGSFLLWIVFMPIYAVA. Topologically, residues 1137 to 1148 are lumenal; the sequence is APAIGFSKEYYG. A helical membrane pass occupies residues 1149-1169; sequence IIPHLYGNLKFWASLLVLPTI. At 1170-1258 the chain is on the cytoplasmic side; the sequence is ALMRDFVWKY…HTRGAYGEMR (89 aa). A 1,2-diacyl-sn-glycero-3-phospho-(1D-myo-inositol 4-phosphate)-binding residues include R1173, W1177, K1178, Y1189, and H1190.

Belongs to the cation transport ATPase (P-type) (TC 3.A.3) family. Type IV subfamily. It depends on Mg(2+) as a cofactor.

It is found in the endoplasmic reticulum membrane. The protein resides in the golgi apparatus. Its subcellular location is the trans-Golgi network membrane. It catalyses the reaction ATP + H2O + phospholipidSide 1 = ADP + phosphate + phospholipidSide 2.. The enzyme catalyses a 1,2-diacyl-sn-glycero-3-phospho-L-serine(out) + ATP + H2O = a 1,2-diacyl-sn-glycero-3-phospho-L-serine(in) + ADP + phosphate + H(+). The catalysed reaction is a 1,2-diacyl-sn-glycero-3-phosphoethanolamine(out) + ATP + H2O = a 1,2-diacyl-sn-glycero-3-phosphoethanolamine(in) + ADP + phosphate + H(+). Functionally, catalytic component of a P4-ATPase flippase complex which catalyzes the hydrolysis of ATP coupled to the transport of phosphatidylserine and small amounts of ethanolamine from the lumen to the cytosolic leaflet of the trans-Golgi network and ensures the maintenance of asymmetric distribution of phospholipids. The polypeptide is Phospholipid-transporting ATPase C887.12 (Schizosaccharomyces pombe (strain 972 / ATCC 24843) (Fission yeast)).